The following is a 220-amino-acid chain: Ribonuclease HII (220 aa).

The 189-residue stretch at 32 to 220 (KHIAGIDEAG…FAPIKGCFDC (189 aa)) folds into the RNase H type-2 domain. Positions 38, 39, and 130 each coordinate a divalent metal cation.

This sequence belongs to the RNase HII family. Mn(2+) serves as cofactor. Mg(2+) is required as a cofactor.

The protein resides in the cytoplasm. The enzyme catalyses Endonucleolytic cleavage to 5'-phosphomonoester.. Functionally, endonuclease that specifically degrades the RNA of RNA-DNA hybrids. This Brucella abortus (strain 2308) protein is Ribonuclease HII.